The primary structure comprises 680 residues: DNA ligase (680 aa).

Residues 38 to 42, 87 to 88, and Glu-119 contribute to the NAD(+) site; these read DAEYD and SL. Lys-121 (N6-AMP-lysine intermediate) is an active-site residue. Residues Arg-142, Glu-179, Lys-296, and Lys-320 each coordinate NAD(+). Zn(2+) is bound by residues Cys-414, Cys-417, Cys-432, and Cys-438. The BRCT domain occupies 597-680; the sequence is IEDLPLKGLT…DLLRKHGRLE (84 aa).

The protein belongs to the NAD-dependent DNA ligase family. LigA subfamily. Mg(2+) serves as cofactor. Mn(2+) is required as a cofactor.

The enzyme catalyses NAD(+) + (deoxyribonucleotide)n-3'-hydroxyl + 5'-phospho-(deoxyribonucleotide)m = (deoxyribonucleotide)n+m + AMP + beta-nicotinamide D-nucleotide.. In terms of biological role, DNA ligase that catalyzes the formation of phosphodiester linkages between 5'-phosphoryl and 3'-hydroxyl groups in double-stranded DNA using NAD as a coenzyme and as the energy source for the reaction. It is essential for DNA replication and repair of damaged DNA. This Cellvibrio japonicus (strain Ueda107) (Pseudomonas fluorescens subsp. cellulosa) protein is DNA ligase.